We begin with the raw amino-acid sequence, 262 residues long: 4-hydroxy-2-oxo-heptane-1,7-dioate aldolase (262 aa).

Histidine 45 serves as the catalytic Proton acceptor. Substrate is bound at residue glutamine 147. Glutamate 149 serves as a coordination point for a divalent metal cation. The substrate site is built by alanine 174 and aspartate 175. Aspartate 175 contacts a divalent metal cation.

This sequence belongs to the HpcH/HpaI aldolase family. In terms of assembly, homohexamer; trimer of dimers. A divalent metal cation is required as a cofactor.

The catalysed reaction is 4-hydroxy-2-oxoheptanedioate = succinate semialdehyde + pyruvate. It catalyses the reaction D-glyceraldehyde + 3-hydroxypyruvate = (3R,4S,5R)-3,4,5,6-tetrahydroxy-2-oxohexanoate. The enzyme catalyses D-glyceraldehyde + 3-hydroxypyruvate = 2-dehydro-D-gluconate. It carries out the reaction D-glyceraldehyde + 3-hydroxypyruvate = 2-dehydro-D-galactonate. The catalysed reaction is D-glyceraldehyde + pyruvate = 2-dehydro-3-deoxy-L-galactonate. It catalyses the reaction 2-dehydro-3-deoxy-D-gluconate = D-glyceraldehyde + pyruvate. Its pathway is aromatic compound metabolism; 4-hydroxyphenylacetate degradation; pyruvate and succinate semialdehyde from 4-hydroxyphenylacetate: step 7/7. In terms of biological role, catalyzes the reversible retro-aldol cleavage of 4-hydroxy-2-ketoheptane-1,7-dioate (HKHD) to pyruvate and succinic semialdehyde. In vitro, can catalyze the aldolisation reaction between hydroxypyruvate (HPA) or pyruvate (PA) and D-glyceraldehyde (D-GA). The condensation of hydroxypyruvate and D-glyceraldehyde produces (3R,4S,5R)-3,4,5,6-tetrahydroxy-2-oxohexanoate as the major product, 2-dehydro-D-gluconate and 2-dehydro-D-galactonate. The condensation of pyruvate and D-glyceraldehyde produces 2-dehydro-3-deoxy-L-galactonate as the major product and 2-dehydro-3-deoxy-D-gluconate. This chain is 4-hydroxy-2-oxo-heptane-1,7-dioate aldolase, found in Escherichia coli (strain ATCC 8739 / DSM 1576 / NBRC 3972 / NCIMB 8545 / WDCM 00012 / Crooks).